A 546-amino-acid polypeptide reads, in one-letter code: CTP synthase (546 aa).

Residues 1–266 (MTTRYIFVTG…DELVVKRFSL (266 aa)) are amidoligase domain. Ser-14 contributes to the CTP binding site. Position 14 (Ser-14) interacts with UTP. Residues 15 to 20 (SLGKGI) and Asp-72 contribute to the ATP site. Mg(2+) is bound by residues Asp-72 and Glu-140. Residues 147–149 (DIE), 187–192 (KTKPTQ), and Lys-223 each bind CTP. UTP is bound by residues 187–192 (KTKPTQ) and Lys-223. Position 239 to 241 (239 to 241 (KDV)) interacts with ATP. The Glutamine amidotransferase type-1 domain maps to 291 to 542 (VIGMVGKYIE…VAAASAHQKR (252 aa)). Gly-352 is an L-glutamine binding site. The Nucleophile; for glutamine hydrolysis role is filled by Cys-379. Residues 380–383 (LGMQ), Glu-403, and Arg-470 contribute to the L-glutamine site. Active-site residues include His-515 and Glu-517.

Belongs to the CTP synthase family. As to quaternary structure, homotetramer.

It catalyses the reaction UTP + L-glutamine + ATP + H2O = CTP + L-glutamate + ADP + phosphate + 2 H(+). The catalysed reaction is L-glutamine + H2O = L-glutamate + NH4(+). It carries out the reaction UTP + NH4(+) + ATP = CTP + ADP + phosphate + 2 H(+). It participates in pyrimidine metabolism; CTP biosynthesis via de novo pathway; CTP from UDP: step 2/2. Allosterically activated by GTP, when glutamine is the substrate; GTP has no effect on the reaction when ammonia is the substrate. The allosteric effector GTP functions by stabilizing the protein conformation that binds the tetrahedral intermediate(s) formed during glutamine hydrolysis. Inhibited by the product CTP, via allosteric rather than competitive inhibition. In terms of biological role, catalyzes the ATP-dependent amination of UTP to CTP with either L-glutamine or ammonia as the source of nitrogen. Regulates intracellular CTP levels through interactions with the four ribonucleotide triphosphates. The sequence is that of CTP synthase from Shewanella oneidensis (strain ATCC 700550 / JCM 31522 / CIP 106686 / LMG 19005 / NCIMB 14063 / MR-1).